We begin with the raw amino-acid sequence, 102 residues long: Secretoglobin family 1D member (102 aa).

An N-terminal signal peptide occupies residues 1-21 (MRLSVTALLVTLALCYYEANA). N-linked (GlcNAc...) asparagine glycosylation is present at asparagine 87.

It belongs to the secretoglobin family. Lipophilin subfamily.

Its subcellular location is the secreted. Its function is as follows. May bind androgens and other steroids. May be under transcriptional regulation of steroid hormones. This is Secretoglobin family 1D member (SCGB1D) from Bos taurus (Bovine).